The chain runs to 685 residues: Amino acid transporter heavy chain SLC3A1 (685 aa).

Basic and acidic residues predominate over residues 1–10 (MDEDKGKRDP). The interval 1-53 (MDEDKGKRDPIQMSLKGCRTNNGFVQNEDIPEQDPDPGSRDTPQPNAVSIPAP) is disordered. Topologically, residues 1–88 (MDEDKGKRDP…ARYRVPREIL (88 aa)) are cytoplasmic. A helical; Signal-anchor for type II membrane protein transmembrane segment spans residues 89–109 (FWLTVVSVFLLIGATIAIIVI). Residues 110–685 (SPKCLDWWQA…SALDILYSSC (576 aa)) lie on the Extracellular side of the membrane. Ca(2+) is bound at residue asparagine 213. 3 N-linked (GlcNAc...) asparagine glycosylation sites follow: asparagine 213, asparagine 240, and asparagine 260. The cysteines at positions 241 and 272 are disulfide-linked. Positions 283, 317, 318, and 320 each coordinate Ca(2+). A glycan (N-linked (GlcNAc...) asparagine) is linked at asparagine 331. Phosphoserine is present on serine 385. 2 N-linked (GlcNAc...) asparagine glycosylation sites follow: asparagine 512 and asparagine 522. 2 cysteine pairs are disulfide-bonded: cysteine 570–cysteine 666 and cysteine 673–cysteine 685.

In terms of assembly, disulfide-linked heterodimer composed of the catalytic light subunit SLC7A9 and the heavy subunit SLC3A1. The heterodimer is the minimal functional unit. Assembles in non-covalently linked heterotetramers (dimers of heterodimers) and higher order oligomers; the oligomerization is mediated by SLC3A1 likely to prevent degradation in the endoplasmic reticulum and facilitate heteromer trafficking to the plasma membrane. Disulfide-linked heterodimer composed of the catalytic light subunit SLC7A13 and the heavy subunit SLC3A1. Expressed in the brush border membrane in the kidney (at protein level). Highly expressed in renal tubules in the outer stripe of the outer medulla and medullary ray (at protein level). Also detected in the renal cortex. More abundant in male than female kidneys.

It is found in the cell membrane. The protein resides in the apical cell membrane. Functionally, acts as a chaperone that facilitates biogenesis and trafficking of functional transporter heteromers to the plasma membrane. Associates with SLC7A9 to form a functional transporter complex that mediates the electrogenic exchange between cationic amino acids and neutral amino acids, with a stoichiometry of 1:1. SLC7A9-SLC3A1 transporter has system b(0,+)-like activity with high affinity for extracellular cationic amino acids and L-cystine and lower affinity for intracellular neutral amino acids. Substrate exchange is driven by high concentration of intracellular neutral amino acids and the intracellular reduction of L-cystine to L-cysteine. SLC7A9-SLC3A1 acts as a major transporter for reabsorption of L-cystine and dibasic amino acids across the brush border membrane in early proximal tubules. Associates with SLC7A13 to form a functional complex that transports anionic and neutral amino acids via exchange or facilitated diffusion. SLC7A13-SLC3A1 may act as a major transporter for L-cystine in late proximal tubules, ensuring its reabsorption from the luminal fluid in exchange for cytosolic L-glutamate or L-aspartate. This chain is Amino acid transporter heavy chain SLC3A1, found in Mus musculus (Mouse).